A 100-amino-acid chain; its full sequence is Pregnancy-associated protein bPAP (100 aa).

Residues 1 to 40 (DSELAGPRGARGPHGLSGPHGLSGLXGPXGYTGPIGMXGL) form a disordered region. The span at 13–29 (PHGLSGPHGLSGLXGPX) shows a compositional bias: low complexity.

As to expression, detected at high levels in the urine of pregnant females (at protein level) and at far lower levels in the urine of nonpregnant females.

In Bos taurus (Bovine), this protein is Pregnancy-associated protein bPAP.